We begin with the raw amino-acid sequence, 194 residues long: MSEIKLIVGLGNPGDKYTDTRHNAGEWLIERLARRFNVSLNPESKFFGKTARTLVNGKEVRLLVPTTFMNLSGKAVGALASFYRIKPEEILVIHDELDLPPGTAKLKQGGGHGGHNGLKDIVAQLGNNNNFYRLRIGIGHPGHRDLVAGYVLNKPSPADRDALEKVLDEATDCVEMIFRDGMVKATNRLNSFKI.

Y17 provides a ligand contact to tRNA. H22 (proton acceptor) is an active-site residue. The tRNA site is built by F68, N70, and N116.

This sequence belongs to the PTH family. Monomer.

The protein resides in the cytoplasm. The enzyme catalyses an N-acyl-L-alpha-aminoacyl-tRNA + H2O = an N-acyl-L-amino acid + a tRNA + H(+). Functionally, hydrolyzes ribosome-free peptidyl-tRNAs (with 1 or more amino acids incorporated), which drop off the ribosome during protein synthesis, or as a result of ribosome stalling. In terms of biological role, catalyzes the release of premature peptidyl moieties from peptidyl-tRNA molecules trapped in stalled 50S ribosomal subunits, and thus maintains levels of free tRNAs and 50S ribosomes. In Haemophilus influenzae (strain ATCC 51907 / DSM 11121 / KW20 / Rd), this protein is Peptidyl-tRNA hydrolase.